The following is a 351-amino-acid chain: Selenide, water dikinase (351 aa).

Residue C20 is part of the active site. ATP is bound by residues K23 and 51–53 (TKD). Mg(2+) is bound at residue D54. ATP contacts are provided by residues D71, D94, and 142–144 (GHS). D94 contacts Mg(2+). D230 is a binding site for Mg(2+).

The protein belongs to the selenophosphate synthase 1 family. Class I subfamily. In terms of assembly, homodimer. It depends on Mg(2+) as a cofactor.

The catalysed reaction is hydrogenselenide + ATP + H2O = selenophosphate + AMP + phosphate + 2 H(+). In terms of biological role, synthesizes selenophosphate from selenide and ATP. This is Selenide, water dikinase from Pasteurella multocida (strain Pm70).